Consider the following 641-residue polypeptide: RING finger containing E3 ubiquitin-protein ligase WSV403 (641 aa).

The RING-type; atypical zinc finger occupies Cys-329 to Phe-371.

The enzyme catalyses S-ubiquitinyl-[E2 ubiquitin-conjugating enzyme]-L-cysteine + [acceptor protein]-L-lysine = [E2 ubiquitin-conjugating enzyme]-L-cysteine + N(6)-ubiquitinyl-[acceptor protein]-L-lysine.. It functions in the pathway protein modification; protein ubiquitination. Functionally, probable E3 ubiquitin-protein ligase which accepts ubiquitin from an E2 ubiquitin-conjugating enzyme in the form of a thioester and then directly transfers the ubiquitin to targeted substrates. The chain is RING finger containing E3 ubiquitin-protein ligase WSV403 from White spot syndrome virus (isolate Shrimp/China/Tongan/1996) (WSSV).